The chain runs to 136 residues: ATP synthase F(0) complex subunit C1, mitochondrial (136 aa).

The N-terminal 61 residues, 1 to 61, are a transit peptide targeting the mitochondrion; sequence MQTTKALLIS…REFQTSVISR (61 aa). Residues 77-97 form a helical membrane-spanning segment; that stretch reads VGVAGSGAGIGTVFGSLIIGY. The residue at position 104 (lysine 104) is an N6,N6,N6-trimethyllysine. The helical transmembrane segment at 112-132 threads the bilayer; the sequence is ILGFALSEAMGLFCLMVAFLI.

Belongs to the ATPase C chain family. Homooctamer; the c-ring consists of eight c subunits forming a circle, and each subunit adopts a hairpin shape. Component of the ATP synthase complex composed at least of ATP5F1A/subunit alpha, ATP5F1B/subunit beta, ATP5MC1/subunit c (homooctomer), MT-ATP6/subunit a, MT-ATP8/subunit 8, ATP5ME/subunit e, ATP5MF/subunit f, ATP5MG/subunit g, ATP5MK/subunit k, ATP5MJ/subunit j, ATP5F1C/subunit gamma, ATP5F1D/subunit delta, ATP5F1E/subunit epsilon, ATP5PF/subunit F6, ATP5PB/subunit b, ATP5PD/subunit d, ATP5PO/subunit OSCP. ATP synthase complex consists of a soluble F(1) head domain (subunits alpha(3) and beta(3)) - the catalytic core - and a membrane F(0) domain - the membrane proton channel (subunits c, a, 8, e, f, g, k and j). These two domains are linked by a central stalk (subunits gamma, delta, and epsilon) rotating inside the F1 region and a stationary peripheral stalk (subunits F6, b, d, and OSCP). Interacts with TMEM70 (homooligomer form); this interaction facilitates the oligomer formation of subunit c/ATP5MC1 (c-ring) and the c-ring membrane insertion and also protects ATP5MC1 against intramitochondrial proteolysis. In terms of processing, trimethylated by ATPSCKMT at Lys-104. Methylation is required for proper incorporation of the C subunit into the ATP synthase complex and mitochondrial respiration.

The protein localises to the mitochondrion membrane. The catalysed reaction is H(+)(in) = H(+)(out). Subunit c, of the mitochondrial membrane ATP synthase complex (F(1)F(0) ATP synthase or Complex V) that produces ATP from ADP in the presence of a proton gradient across the membrane which is generated by electron transport complexes of the respiratory chain. ATP synthase complex consist of a soluble F(1) head domain - the catalytic core - and a membrane F(1) domain - the membrane proton channel. These two domains are linked by a central stalk rotating inside the F(1) region and a stationary peripheral stalk. During catalysis, ATP synthesis in the catalytic domain of F(1) is coupled via a rotary mechanism of the central stalk subunits to proton translocation. With the subunit a (MT-ATP6), forms the proton-conducting channel in the F(0) domain, that contains two crucial half-channels (inlet and outlet) that facilitate proton movement from the mitochondrial intermembrane space (IMS) into the matrix. Protons are taken up via the inlet half-channel and released through the outlet half-channel, following a Grotthuss mechanism. This chain is ATP synthase F(0) complex subunit C1, mitochondrial, found in Rattus norvegicus (Rat).